Reading from the N-terminus, the 554-residue chain is Zinc finger protein 426 (554 aa).

The KRAB domain maps to 42–112; that stretch reads VTFDDVAVDF…QGGVLQGWEM (71 aa). A C2H2-type 1; atypical zinc finger spans residues 146–174; the sequence is CDCEQCGEVFSEHSCLKTHVRTQSTGNTH. 11 consecutive C2H2-type zinc fingers follow at residues 224–246, 280–302, 308–330, 336–358, 364–386, 392–414, 420–442, 448–470, 476–498, 504–526, and 532–554; these read FECS…MRTH, YKCK…MRTH, YECK…GRTH, YVCK…VRSH, YECK…IRTH, FVCV…LRTH, CECK…MRTH, YTCK…MRIH, YECK…ERTH, YECK…EKTH, and YKCQ…EQIH.

It is found in the nucleus. Functionally, may be involved in transcriptional regulation. The protein is Zinc finger protein 426 (ZNF426) of Homo sapiens (Human).